A 249-amino-acid chain; its full sequence is Pyridoxine 5'-phosphate synthase (249 aa).

Residue N12 participates in 3-amino-2-oxopropyl phosphate binding. 14–15 (DH) contacts 1-deoxy-D-xylulose 5-phosphate. R23 serves as a coordination point for 3-amino-2-oxopropyl phosphate. H48 serves as the catalytic Proton acceptor. The 1-deoxy-D-xylulose 5-phosphate site is built by R50 and H55. E75 serves as the catalytic Proton acceptor. 1-deoxy-D-xylulose 5-phosphate is bound at residue T105. Residue H199 is the Proton donor of the active site. 3-amino-2-oxopropyl phosphate contacts are provided by residues G200 and 221-222 (GH).

Belongs to the PNP synthase family. Homooctamer; tetramer of dimers.

It is found in the cytoplasm. The enzyme catalyses 3-amino-2-oxopropyl phosphate + 1-deoxy-D-xylulose 5-phosphate = pyridoxine 5'-phosphate + phosphate + 2 H2O + H(+). Its pathway is cofactor biosynthesis; pyridoxine 5'-phosphate biosynthesis; pyridoxine 5'-phosphate from D-erythrose 4-phosphate: step 5/5. Catalyzes the complicated ring closure reaction between the two acyclic compounds 1-deoxy-D-xylulose-5-phosphate (DXP) and 3-amino-2-oxopropyl phosphate (1-amino-acetone-3-phosphate or AAP) to form pyridoxine 5'-phosphate (PNP) and inorganic phosphate. In Roseobacter denitrificans (strain ATCC 33942 / OCh 114) (Erythrobacter sp. (strain OCh 114)), this protein is Pyridoxine 5'-phosphate synthase.